The sequence spans 296 residues: 4-amino-4-deoxyprephenate dehydrogenase (296 aa).

Positions 9–288 (RCVVVGGAGA…EHGAELERLC (280 aa)) constitute a Prephenate/arogenate dehydrogenase domain.

Belongs to the prephenate/arogenate dehydrogenase family.

It carries out the reaction 4-amino-4-deoxyprephenate + NAD(+) = 3-(4-aminophenyl)pyruvate + CO2 + NADH + H(+). The protein operates within antibiotic biosynthesis. In terms of biological role, involved in pristinamycin I biosynthesis. Probably catalyzes the formation of 3-(4-aminophenyl)pyruvate from 4-amino-4-deoxyprephenate. The protein is 4-amino-4-deoxyprephenate dehydrogenase of Streptomyces pristinaespiralis.